The sequence spans 139 residues: D-ribose pyranase (139 aa).

Histidine 20 acts as the Proton donor in catalysis. Substrate contacts are provided by residues aspartate 28, histidine 106, and 128–130 (YAN).

It belongs to the RbsD / FucU family. RbsD subfamily. As to quaternary structure, homodecamer.

It is found in the cytoplasm. The enzyme catalyses beta-D-ribopyranose = beta-D-ribofuranose. It participates in carbohydrate metabolism; D-ribose degradation; D-ribose 5-phosphate from beta-D-ribopyranose: step 1/2. Its function is as follows. Catalyzes the interconversion of beta-pyran and beta-furan forms of D-ribose. The sequence is that of D-ribose pyranase from Pectobacterium atrosepticum (strain SCRI 1043 / ATCC BAA-672) (Erwinia carotovora subsp. atroseptica).